A 181-amino-acid chain; its full sequence is Adenine phosphoribosyltransferase (181 aa).

It belongs to the purine/pyrimidine phosphoribosyltransferase family. In terms of assembly, homodimer.

It localises to the cytoplasm. The catalysed reaction is AMP + diphosphate = 5-phospho-alpha-D-ribose 1-diphosphate + adenine. Its pathway is purine metabolism; AMP biosynthesis via salvage pathway; AMP from adenine: step 1/1. Functionally, catalyzes a salvage reaction resulting in the formation of AMP, that is energically less costly than de novo synthesis. The protein is Adenine phosphoribosyltransferase of Chelativorans sp. (strain BNC1).